Here is a 317-residue protein sequence, read N- to C-terminus: Olfactory receptor 2T27 (317 aa).

At 1–22 (MEQSNYSVYADFILLGLFSNAR) the chain is on the extracellular side. Asparagine 5 is a glycosylation site (N-linked (GlcNAc...) asparagine). Residues 23–43 (FPWLLFALILLVFLTSIASNV) traverse the membrane as a helical segment. The Cytoplasmic portion of the chain corresponds to 44–60 (VKIILIHIDSRLHTPMY). A helical transmembrane segment spans residues 61-83 (FLLSQLSLRDILYISTIVPKMLV). The Extracellular segment spans residues 84–97 (DQVMSQRAISFAGC). Cysteine 97 and cysteine 189 form a disulfide bridge. A helical transmembrane segment spans residues 98-118 (TAQHFLYLTLAGAEFFLLGLM). Residues 119–139 (SYDRYVAICNPLHYPVLMSRK) are Cytoplasmic-facing. The helical transmembrane segment at 140-160 (ICWLIVAAAWLGGSIDGFLLT) threads the bilayer. The Extracellular portion of the chain corresponds to 161–197 (PVTMQFPFCASREINHFFCEVPALLKLSCTDTSAYET). The helical transmembrane segment at 198–218 (AMYVCCIMMLLIPFSVISGSY) threads the bilayer. Topologically, residues 219 to 244 (TRILITVYRMSEAEGRGKAVATCSSH) are cytoplasmic. A helical transmembrane segment spans residues 245 to 265 (MVVVSLFYGAAMYTYVLPHSY). The Extracellular portion of the chain corresponds to 266-271 (HTPEQD). The chain crosses the membrane as a helical span at residues 272-292 (KAVSAFYTILTPMLNPLIYSL). Over 293–317 (RNKDVTGALQKVVGRCVSSGKVTTF) the chain is Cytoplasmic.

Belongs to the G-protein coupled receptor 1 family.

Its subcellular location is the cell membrane. In terms of biological role, odorant receptor. This chain is Olfactory receptor 2T27 (OR2T27), found in Homo sapiens (Human).